Here is a 180-residue protein sequence, read N- to C-terminus: MASVIEKGLASICCVTTSSKPWAEGEADGDVKYEDLRGPGGRNTSGSVSDKRICVPQKIDPKTFFANERTFLKWMSISVMIGMMSLTLLNFGDTSSNASELAGLVLLPVSILFMIHSLFVFKDRANKIYMREPMRYDDTKGPTILVLVLGVSLGIAAIFSVQKQYYRTASSSFNDGPRFS.

Residues M1–T70 are Cytoplasmic-facing. The chain crosses the membrane as a helical span at residues F71–F91. The Vacuolar segment spans residues G92–E100. Residues L101–F121 traverse the membrane as a helical segment. The Cytoplasmic portion of the chain corresponds to K122–K140. A helical transmembrane segment spans residues G141 to V161. Residues Q162–S180 are Vacuolar-facing.

The protein belongs to the VTC1 family. The VTC core complex is an integral membrane heterooligomer composed of at least the catalytic subunit vtc4 and the accessory subunits vtc1 and vtc2. vtc1 is a small membrane protein without hydrophilic domain. Vtc2 and vtc4 are related and have 2 hydrophilic domains that face the cytosol, an N-terminal SPX domain and the central core domain. The central core in vtc4 is the catalytic domain.

Its subcellular location is the acidocalcisome membrane. Accessory subunit of the vacuolar transporter chaperone (VTC) complex. The VTC complex acts as a vacuolar polyphosphate polymerase that catalyzes the synthesis of inorganic polyphosphate (polyP) via transfer of phosphate from ATP to a growing polyP chain, releasing ADP. VTC exposes its catalytic domain vtc4 to the cytosol, where the growing polyP chain winds through a tunnel-shaped pocket, integrating cytoplasmic polymer synthesis with polyP membrane translocation. The VTC complex carries 9 vacuolar transmembrane domains, which are likely to constitute the translocation channel into the organelle lumen. PolyP synthesis is tightly coupled to its transport into the vacuole lumen, in order to avoid otherwise toxic intermediates in the cytosol, and it depends on the proton gradient across the membrane, formed by V-ATPase. VTC1 contributes only 3 transmembrane domains to the complex. The VTC complex also plays a role in vacuolar membrane fusion. In Trypanosoma brucei brucei (strain 927/4 GUTat10.1), this protein is Vacuolar transporter chaperone complex subunit 1 (VTC1).